The following is a 421-amino-acid chain: MDISPRTRPDLPLPSAAIAEPTRHEPDAGGHFGVYGGRYVAEALMAVIEEVTTAYEKERVNQDFLDTLDYLQANYAGRPSPLYEAPRLSEQAGARIFLKREDLNHTGSHKINNVLGQALLAQRMGKKRVIAETGAGQHGVATATACALLGLECVIYMGAVDTERQALNVARMRLLGATVVSVQSGSKTLKDAINEAFRDWVTNADNTFYCFGTAAGPHPFPAMVRDFQRIIGLEARAQIQAQAGRLPDAVLACIGGGSNAIGIFHPFIDDPGVRLIGFEAAGDGVETGRHAATFSGGSPGAFQGSFSYLLQDEDGQTIESHSISAGLDYPGVGPEHAWLRERVSTTRGWVRNTRGCARFRTLCRTEGIIPAIESAHAVAGALKVAPELGKAAIIVVNLSGRGDKDVETAAQWFGLLGSSDR.

Lys110 is modified (N6-(pyridoxal phosphate)lysine).

The protein belongs to the TrpB family. In terms of assembly, tetramer of two alpha and two beta chains. The cofactor is pyridoxal 5'-phosphate.

The enzyme catalyses (1S,2R)-1-C-(indol-3-yl)glycerol 3-phosphate + L-serine = D-glyceraldehyde 3-phosphate + L-tryptophan + H2O. Its pathway is amino-acid biosynthesis; L-tryptophan biosynthesis; L-tryptophan from chorismate: step 5/5. Functionally, the beta subunit is responsible for the synthesis of L-tryptophan from indole and L-serine. The chain is Tryptophan synthase beta chain (trpB) from Mycobacterium intracellulare.